Reading from the N-terminus, the 1423-residue chain is DNA-directed RNA polymerase subunit beta' (1423 aa).

Positions 71, 73, 86, and 89 each coordinate Zn(2+). Asp-461, Asp-463, and Asp-465 together coordinate Mg(2+). Positions 815, 889, 896, and 899 each coordinate Zn(2+).

The protein belongs to the RNA polymerase beta' chain family. In terms of assembly, the RNAP catalytic core consists of 2 alpha, 1 beta, 1 beta' and 1 omega subunit. When a sigma factor is associated with the core the holoenzyme is formed, which can initiate transcription. It depends on Mg(2+) as a cofactor. Zn(2+) is required as a cofactor.

It carries out the reaction RNA(n) + a ribonucleoside 5'-triphosphate = RNA(n+1) + diphosphate. Its function is as follows. DNA-dependent RNA polymerase catalyzes the transcription of DNA into RNA using the four ribonucleoside triphosphates as substrates. In Actinobacillus pleuropneumoniae serotype 3 (strain JL03), this protein is DNA-directed RNA polymerase subunit beta'.